The chain runs to 939 residues: Nonsense-mediated mRNA decay factor SMG8 (939 aa).

2 disordered regions span residues 561–600 (KICTPQGEDENEDGETEEADEDTEEKEQAEGDNCSQQLSP) and 617–645 (LNESQESSEQLSGSEHESPNSGTSSADTE). Over residues 567–587 (GEDENEDGETEEADEDTEEKE) the composition is skewed to acidic residues. The span at 617–629 (LNESQESSEQLSG) shows a compositional bias: low complexity.

Belongs to the SMG8 family.

Involved in nonsense-mediated decay (NMD) of mRNAs containing premature stop codons. Probable component of kinase complex containing nonC and recruited to stalled ribosomes. The sequence is that of Nonsense-mediated mRNA decay factor SMG8 from Drosophila ananassae (Fruit fly).